Here is a 238-residue protein sequence, read N- to C-terminus: CBS domain-containing protein CBSX2, chloroplastic (238 aa).

A chloroplast-targeting transit peptide spans 1 to 71 (MGSISLSNSM…ASVNNNNSVP (71 aa)). CBS domains lie at 83–145 (MTPR…QNDT) and 177–234 (MTPS…KRET).

The protein localises to the plastid. It is found in the chloroplast stroma. The chain is CBS domain-containing protein CBSX2, chloroplastic (CBSX2) from Arabidopsis thaliana (Mouse-ear cress).